A 303-amino-acid chain; its full sequence is Probable endonuclease 4 (303 aa).

Zn(2+)-binding residues include H75, H115, E151, D185, H188, H221, D234, H236, and E266.

It belongs to the AP endonuclease 2 family. Requires Zn(2+) as cofactor.

It catalyses the reaction Endonucleolytic cleavage to 5'-phosphooligonucleotide end-products.. Its function is as follows. Endonuclease IV plays a role in DNA repair. It cleaves phosphodiester bonds at apurinic or apyrimidinic (AP) sites, generating a 3'-hydroxyl group and a 5'-terminal sugar phosphate. The sequence is that of Probable endonuclease 4 from Ureaplasma parvum serovar 3 (strain ATCC 700970).